The sequence spans 744 residues: Tripartite motif-containing protein 2 (744 aa).

Ser-10 is modified (phosphoserine). The segment at 23 to 64 adopts an RING-type zinc-finger fold; sequence CSICLERYKNPKVLPCLHTFCERCLQNYIPAHSLTLSCPVCR. The segment at 113-154 adopts a B box-type zinc-finger fold; the sequence is GKPLSCPNHDGNVMEFYCQSCETAMCRECTEGEHAEHPTVPL. Positions 118, 121, 141, and 146 each coordinate Zn(2+). A Filamin repeat occupies 320 to 421; sequence TTNAVASETV…IRGSPFKLKV (102 aa). Position 371 is a phosphothreonine (Thr-371). A phosphoserine mark is found at Ser-375, Ser-424, and Ser-428. Residues 432-462 form a disordered region; the sequence is EGVKRRVKSPGSGHVKQKAVKRPASMYSTGK. NHL repeat units lie at residues 473–516, 520–563, 564–605, 609–652, 656–699, and 700–743; these read IFRV…FSND, KSRF…FSND, GKFK…FQPN, VTRF…FNQE, MLKF…FDGS, and GSFL…YRYL.

This sequence belongs to the TRIM/RBCC family. Forms homooligomers. Interacts with TRIM3; this interaction reduces TRIM2 activity. Interacts with myosin V; myosin V may not be a substrate for ubiquitination. Interacts with NEFL. Interacts with phosphorylated BCL2L11. Interacts with SIRPA. RING-type zinc finger-dependent and UBE2D1-dependent autoubiquitination.

It catalyses the reaction S-ubiquitinyl-[E2 ubiquitin-conjugating enzyme]-L-cysteine + [acceptor protein]-L-lysine = [E2 ubiquitin-conjugating enzyme]-L-cysteine + N(6)-ubiquitinyl-[acceptor protein]-L-lysine.. The protein operates within protein modification; protein ubiquitination. Its function is as follows. UBE2D1-dependent E3 ubiquitin-protein ligase that mediates the ubiquitination of NEFL and of phosphorylated BCL2L11. Plays a neuroprotective function. May play a role in neuronal rapid ischemic tolerance. Plays a role in antiviral immunity and limits New World arenavirus infection independently of its ubiquitin ligase activity. The chain is Tripartite motif-containing protein 2 (Trim2) from Rattus norvegicus (Rat).